A 740-amino-acid polypeptide reads, in one-letter code: Elongation factor 2 (740 aa).

One can recognise a tr-type G domain in the interval 18–263 (EQVRNIGIIA…MVVRWVPNPR (246 aa)). GTP-binding positions include 27-34 (AHVDHGKT), 93-97 (DTPGH), and 147-150 (NKVD). At histidine 606 the chain carries Diphthamide.

The protein belongs to the TRAFAC class translation factor GTPase superfamily. Classic translation factor GTPase family. EF-G/EF-2 subfamily.

It localises to the cytoplasm. Its function is as follows. Catalyzes the GTP-dependent ribosomal translocation step during translation elongation. During this step, the ribosome changes from the pre-translocational (PRE) to the post-translocational (POST) state as the newly formed A-site-bound peptidyl-tRNA and P-site-bound deacylated tRNA move to the P and E sites, respectively. Catalyzes the coordinated movement of the two tRNA molecules, the mRNA and conformational changes in the ribosome. This chain is Elongation factor 2, found in Ignicoccus hospitalis (strain KIN4/I / DSM 18386 / JCM 14125).